The following is a 310-amino-acid chain: ADP-L-glycero-D-manno-heptose-6-epimerase (310 aa).

NADP(+)-binding positions include 10 to 11 (FI), 31 to 32 (DN), Lys38, Lys53, 75 to 79 (EGACS), and Asn92. Tyr140 (proton acceptor) is an active-site residue. Position 144 (Lys144) interacts with NADP(+). Asn169 serves as a coordination point for substrate. Val170 and Lys178 together coordinate NADP(+). Catalysis depends on Lys178, which acts as the Proton acceptor. Residues Ser180, His187, 201 to 204 (FEGS), and Arg209 contribute to the substrate site. The residue at position 267 (Lys267) is an N6-acetyllysine. Tyr272 provides a ligand contact to substrate.

The protein belongs to the NAD(P)-dependent epimerase/dehydratase family. HldD subfamily. Homopentamer. The cofactor is NADP(+).

It catalyses the reaction ADP-D-glycero-beta-D-manno-heptose = ADP-L-glycero-beta-D-manno-heptose. The protein operates within nucleotide-sugar biosynthesis; ADP-L-glycero-beta-D-manno-heptose biosynthesis; ADP-L-glycero-beta-D-manno-heptose from D-glycero-beta-D-manno-heptose 7-phosphate: step 4/4. Functionally, catalyzes the interconversion between ADP-D-glycero-beta-D-manno-heptose and ADP-L-glycero-beta-D-manno-heptose via an epimerization at carbon 6 of the heptose. This Escherichia coli (strain ATCC 8739 / DSM 1576 / NBRC 3972 / NCIMB 8545 / WDCM 00012 / Crooks) protein is ADP-L-glycero-D-manno-heptose-6-epimerase.